We begin with the raw amino-acid sequence, 123 residues long: Small ribosomal subunit protein uS12 (123 aa).

Asp89 bears the 3-methylthioaspartic acid mark. Residues 104-123 (TAGVQDRRQGRSKYGAKRPK) form a disordered region. A compositionally biased stretch (basic residues) spans 113-123 (GRSKYGAKRPK).

The protein belongs to the universal ribosomal protein uS12 family. In terms of assembly, part of the 30S ribosomal subunit. Contacts proteins S8 and S17. May interact with IF1 in the 30S initiation complex.

Functionally, with S4 and S5 plays an important role in translational accuracy. Its function is as follows. Interacts with and stabilizes bases of the 16S rRNA that are involved in tRNA selection in the A site and with the mRNA backbone. Located at the interface of the 30S and 50S subunits, it traverses the body of the 30S subunit contacting proteins on the other side and probably holding the rRNA structure together. The combined cluster of proteins S8, S12 and S17 appears to hold together the shoulder and platform of the 30S subunit. This is Small ribosomal subunit protein uS12 from Oleidesulfovibrio alaskensis (strain ATCC BAA-1058 / DSM 17464 / G20) (Desulfovibrio alaskensis).